The following is a 2136-amino-acid chain: Protein Ycf2 (2136 aa).

1404–1411 serves as a coordination point for ATP; that stretch reads GPIETGRS.

This sequence belongs to the Ycf2 family.

Its subcellular location is the plastid. The protein localises to the chloroplast stroma. Functionally, probable ATPase of unknown function. Its presence in a non-photosynthetic plant (Epifagus virginiana) and experiments in tobacco indicate that it has an essential function which is probably not related to photosynthesis. The polypeptide is Protein Ycf2 (Marchantia polymorpha (Common liverwort)).